We begin with the raw amino-acid sequence, 126 residues long: Small ribosomal subunit protein uS13 (126 aa).

Positions R94–K126 are disordered. A compositionally biased stretch (basic residues) spans R108–K126.

This sequence belongs to the universal ribosomal protein uS13 family. Part of the 30S ribosomal subunit. Forms a loose heterodimer with protein S19. Forms two bridges to the 50S subunit in the 70S ribosome.

Located at the top of the head of the 30S subunit, it contacts several helices of the 16S rRNA. In the 70S ribosome it contacts the 23S rRNA (bridge B1a) and protein L5 of the 50S subunit (bridge B1b), connecting the 2 subunits; these bridges are implicated in subunit movement. Contacts the tRNAs in the A and P-sites. The protein is Small ribosomal subunit protein uS13 of Streptomyces avermitilis (strain ATCC 31267 / DSM 46492 / JCM 5070 / NBRC 14893 / NCIMB 12804 / NRRL 8165 / MA-4680).